We begin with the raw amino-acid sequence, 53 residues long: Alpha-1-antiproteinase 1 (53 aa).

Positions 1–28 are disordered; the sequence is EDLQGDAVPETSATKDDNEXPEMIPMSL.

It belongs to the serpin family. In terms of processing, N-glycosylated; contains biantennary glycans. As to expression, plasma.

Its subcellular location is the secreted. This is Alpha-1-antiproteinase 1 from Equus caballus (Horse).